Consider the following 297-residue polypeptide: Iron/alpha-ketoglutarate-dependent dioxygenase ausU (297 aa).

Residues His-130, Asp-132, and His-206 each contribute to the Fe cation site.

The protein belongs to the PhyH family. In terms of assembly, homodimer. Fe cation serves as cofactor.

Its pathway is secondary metabolite biosynthesis; terpenoid biosynthesis. In terms of biological role, iron/alpha-ketoglutarate-dependent dioxygenase; part of the gene cluster that mediates the biosynthesis of calidodehydroaustin, a fungal meroterpenoid. The first step of the pathway is the synthesis of 3,5-dimethylorsellinic acid by the polyketide synthase ausA. 3,5-dimethylorsellinic acid is then prenylated by the polyprenyl transferase ausN. Further epoxidation by the FAD-dependent monooxygenase ausM and cyclization by the probable terpene cyclase ausL lead to the formation of protoaustinoid A. Protoaustinoid A is then oxidized to spiro-lactone preaustinoid A3 by the combined action of the FAD-binding monooxygenases ausB and ausC, and the dioxygenase ausE. Acid-catalyzed keto-rearrangement and ring contraction of the tetraketide portion of preaustinoid A3 by ausJ lead to the formation of preaustinoid A4. The aldo-keto reductase ausK, with the help of ausH, is involved in the next step by transforming preaustinoid A4 into isoaustinone which is in turn hydroxylated by the P450 monooxygenase ausI to form austinolide. The cytochrome P450 monooxygenase ausG modifies austinolide to austinol. Austinol is further acetylated to austin by the O-acetyltransferase ausP, which spontaneously changes to dehydroaustin. The cytochrome P450 monooxygenase ausR then converts dehydroaustin is into 7-dehydrodehydroaustin. The hydroxylation catalyzed by ausR permits the O-acetyltransferase ausQ to add an additional acetyl group to the molecule, leading to the formation of acetoxydehydroaustin. The short chain dehydrogenase ausT catalyzes the reduction of the double bond present between carbon atoms 1 and 2 to convert 7-dehydrodehydroaustin into 1,2-dihydro-7-hydroxydehydroaustin. AusQ catalyzes not only an acetylation reaction but also the addition of the PKS ausV diketide product to 1,2-dihydro-7-hydroxydehydroaustin, forming precalidodehydroaustin. Finally, the iron/alpha-ketoglutarate-dependent dioxygenase converts precalidodehydroaustin into calidodehydroaustin. The sequence is that of Iron/alpha-ketoglutarate-dependent dioxygenase ausU from Aspergillus calidoustus.